Consider the following 96-residue polypeptide: Aspartyl/glutamyl-tRNA(Asn/Gln) amidotransferase subunit C (96 aa).

This sequence belongs to the GatC family. In terms of assembly, heterotrimer of A, B and C subunits.

The catalysed reaction is L-glutamyl-tRNA(Gln) + L-glutamine + ATP + H2O = L-glutaminyl-tRNA(Gln) + L-glutamate + ADP + phosphate + H(+). The enzyme catalyses L-aspartyl-tRNA(Asn) + L-glutamine + ATP + H2O = L-asparaginyl-tRNA(Asn) + L-glutamate + ADP + phosphate + 2 H(+). Its function is as follows. Allows the formation of correctly charged Asn-tRNA(Asn) or Gln-tRNA(Gln) through the transamidation of misacylated Asp-tRNA(Asn) or Glu-tRNA(Gln) in organisms which lack either or both of asparaginyl-tRNA or glutaminyl-tRNA synthetases. The reaction takes place in the presence of glutamine and ATP through an activated phospho-Asp-tRNA(Asn) or phospho-Glu-tRNA(Gln). This is Aspartyl/glutamyl-tRNA(Asn/Gln) amidotransferase subunit C from Leptospira borgpetersenii serovar Hardjo-bovis (strain JB197).